The following is a 155-amino-acid chain: Ribonuclease H (155 aa).

The region spanning 5–146 is the RNase H type-1 domain; the sequence is DQKPVIIHTD…ADQLARDGLT (142 aa). Asp-14, Glu-52, Asp-74, and Asp-138 together coordinate Mg(2+). Positions 133-155 are disordered; the sequence is ENERADQLARDGLTENRMKSRVK.

Belongs to the RNase H family. Monomer. Mg(2+) is required as a cofactor.

The protein resides in the cytoplasm. The catalysed reaction is Endonucleolytic cleavage to 5'-phosphomonoester.. In terms of biological role, endonuclease that specifically degrades the RNA of RNA-DNA hybrids. The sequence is that of Ribonuclease H from Rhodopseudomonas palustris (strain ATCC BAA-98 / CGA009).